A 337-amino-acid polypeptide reads, in one-letter code: DNA-directed RNA polymerase subunit alpha (337 aa).

The alpha N-terminal domain (alpha-NTD) stretch occupies residues 1–233 (MVREKVTVST…DLFIPFLHME (233 aa)). Positions 265–337 (KKIALKSIFI…FVIDLAKNKF (73 aa)) are alpha C-terminal domain (alpha-CTD).

It belongs to the RNA polymerase alpha chain family. In plastids the minimal PEP RNA polymerase catalytic core is composed of four subunits: alpha, beta, beta', and beta''. When a (nuclear-encoded) sigma factor is associated with the core the holoenzyme is formed, which can initiate transcription.

It localises to the plastid. Its subcellular location is the chloroplast. The catalysed reaction is RNA(n) + a ribonucleoside 5'-triphosphate = RNA(n+1) + diphosphate. In terms of biological role, DNA-dependent RNA polymerase catalyzes the transcription of DNA into RNA using the four ribonucleoside triphosphates as substrates. This is DNA-directed RNA polymerase subunit alpha from Nicotiana sylvestris (Wood tobacco).